The sequence spans 823 residues: Nuclear factor I family protein (823 aa).

Residues methionine 1 to proline 56 form a disordered region. Low complexity predominate over residues serine 10–serine 25. Residues glutamate 26 to glutamate 52 are compositionally biased toward polar residues. Positions isoleucine 61–tyrosine 253 form a DNA-binding region, CTF/NF-I. 3 disordered regions span residues proline 364–valine 408, serine 433–serine 468, and alanine 777–lysine 823. A compositionally biased stretch (basic and acidic residues) spans proline 386 to serine 396. The segment covering serine 433–glutamine 447 has biased composition (polar residues). Over residues alanine 777–asparagine 794 the composition is skewed to low complexity.

This sequence belongs to the CTF/NF-I family. In terms of tissue distribution, expressed in muscles, neurons and intestinal cells.

It is found in the nucleus. Its function is as follows. Probable transcription factor which recognizes and binds the palindromic sequence 5'-TTGGCANNNTGCCAA-3' present in promoters. Plays a role in locomotion, pharyngeal pumping, egg-laying, and life span. This is Nuclear factor I family protein from Caenorhabditis elegans.